Reading from the N-terminus, the 248-residue chain is 3-oxoacyl-[acyl-carrier-protein] reductase FabG (248 aa).

NADP(+) is bound by residues 14 to 17 (GGSR), 65 to 66 (DV), and Asn-92. Position 144 (Ser-144) interacts with substrate. Catalysis depends on Tyr-157, which acts as the Proton acceptor. Residues 157–161 (YAAAK) and Ile-190 each bind NADP(+).

The protein belongs to the short-chain dehydrogenases/reductases (SDR) family. In terms of assembly, homotetramer.

It catalyses the reaction a (3R)-hydroxyacyl-[ACP] + NADP(+) = a 3-oxoacyl-[ACP] + NADPH + H(+). Its pathway is lipid metabolism; fatty acid biosynthesis. Functionally, catalyzes the NADPH-dependent reduction of beta-ketoacyl-ACP substrates to beta-hydroxyacyl-ACP products, the first reductive step in the elongation cycle of fatty acid biosynthesis. The sequence is that of 3-oxoacyl-[acyl-carrier-protein] reductase FabG (fabG) from Chlamydia muridarum (strain MoPn / Nigg).